We begin with the raw amino-acid sequence, 947 residues long: Plasma membrane ATPase 2 (947 aa).

Positions 1-103 are disordered; the sequence is MSSTEAKQYK…TDGVHAGQRV (103 aa). At 1–144 the chain is on the cytoplasmic side; the sequence is MSSTEAKQYK…AEENESLIVK (144 aa). The span at 7–22 shows a compositional bias: basic and acidic residues; that stretch reads KQYKEKPSKEYLHASD. A compositionally biased stretch (low complexity) spans 26-61; the sequence is PANNSAASSSSSSSTSTSASSSAAAVPRKAAAASAA. A compositionally biased stretch (acidic residues) spans 62-74; the sequence is DDSDSDEDIDQLI. Residues 145 to 165 traverse the membrane as a helical segment; the sequence is FLMFFVGPIQFVMEAAAILAA. The Extracellular segment spans residues 166–169; that stretch reads GLSD. The chain crosses the membrane as a helical span at residues 170 to 189; the sequence is WVDVGVICALLLLNASVGFI. Residues 190 to 320 are Cytoplasmic-facing; it reads QEFQAGSIVD…VEGHFTEVLN (131 aa). A helical transmembrane segment spans residues 321–342; sequence GIGIILLVLVIATLLLVWTACF. Residues 343–353 lie on the Extracellular side of the membrane; sequence YRTVGIVSILR. The chain crosses the membrane as a helical span at residues 354-376; the sequence is YTLGITIIGVPVGLPAVVTTTMA. Residues 377 to 748 lie on the Cytoplasmic side of the membrane; the sequence is VGAAYLAKKQ…IAILNNSLDI (372 aa). The 4-aspartylphosphate intermediate role is filled by Asp-407. Residues Asp-663 and Asp-667 each coordinate Mg(2+). Residues 749–767 form a helical membrane-spanning segment; the sequence is NLIVFIAIFADVATLTIAY. Residues 768–783 lie on the Extracellular side of the membrane; it reads DNAPYAPEPVKWNLPR. Residues 784–803 form a helical membrane-spanning segment; it reads LWGMSIILGIVLAIGSWITL. Residues 804–853 lie on the Cytoplasmic side of the membrane; the sequence is TTMFLPNGGIIQNFGAMNGVMFLQISLTENWLIFVTRAAGPFWSSIPSWQ. The chain crosses the membrane as a helical span at residues 854–874; sequence LAGAVFAVDIIATMFTLFGWW. The Extracellular portion of the chain corresponds to 875–886; the sequence is SENWTDIVSVVR. Residues 887-903 traverse the membrane as a helical segment; sequence VWIWSIGIFCVLGGFYY. The Cytoplasmic portion of the chain corresponds to 904–947; it reads IMSTSQAFDRLMNGKSLKEKKSTRSVEDFMAAMQRVSTQHEKSS.

Belongs to the cation transport ATPase (P-type) (TC 3.A.3) family. Type IIIA subfamily.

The protein localises to the cell membrane. The catalysed reaction is ATP + H2O + H(+)(in) = ADP + phosphate + 2 H(+)(out). Functionally, the plasma membrane ATPase of plants and fungi is a hydrogen ion pump. The proton gradient it generates drives the active transport of nutrients by H(+)-symport. The resulting external acidification and/or internal alkinization may mediate growth responses. The sequence is that of Plasma membrane ATPase 2 (PMA2) from Saccharomyces cerevisiae (strain ATCC 204508 / S288c) (Baker's yeast).